The sequence spans 315 residues: Homoserine kinase (315 aa).

Residue Pro-97 to Thr-107 coordinates ATP.

It belongs to the GHMP kinase family. Homoserine kinase subfamily.

It is found in the cytoplasm. It catalyses the reaction L-homoserine + ATP = O-phospho-L-homoserine + ADP + H(+). It participates in amino-acid biosynthesis; L-threonine biosynthesis; L-threonine from L-aspartate: step 4/5. In terms of biological role, catalyzes the ATP-dependent phosphorylation of L-homoserine to L-homoserine phosphate. The chain is Homoserine kinase from Prochlorococcus marinus (strain MIT 9215).